The chain runs to 450 residues: Signal recognition particle 54 kDa protein (450 aa).

Residues 107–114, 188–192, and 247–250 contribute to the GTP site; these read GIQGSGKT, DTAGR, and TKLD.

Belongs to the GTP-binding SRP family. SRP54 subfamily. In terms of assembly, part of the signal recognition particle protein translocation system, which is composed of SRP and FtsY. Archaeal SRP consists of a 7S RNA molecule of 300 nucleotides and two protein subunits: SRP54 and SRP19.

Its subcellular location is the cytoplasm. It catalyses the reaction GTP + H2O = GDP + phosphate + H(+). Its function is as follows. Involved in targeting and insertion of nascent membrane proteins into the cytoplasmic membrane. Binds to the hydrophobic signal sequence of the ribosome-nascent chain (RNC) as it emerges from the ribosomes. The SRP-RNC complex is then targeted to the cytoplasmic membrane where it interacts with the SRP receptor FtsY. The sequence is that of Signal recognition particle 54 kDa protein from Methanococcus maripaludis (strain C5 / ATCC BAA-1333).